We begin with the raw amino-acid sequence, 198 residues long: NAD(P)H dehydrogenase (quinone) (198 aa).

The Flavodoxin-like domain occupies 4–189 (ILVLYYSMYG…SIARYQGEYV (186 aa)). FMN is bound by residues 10-15 (SMYGHI) and 78-80 (TRF). Y12 contributes to the NAD(+) binding site. W98 lines the substrate pocket. Residues 113 to 118 (STGTGG) and H133 each bind FMN.

It belongs to the WrbA family. The cofactor is FMN.

It catalyses the reaction a quinone + NADH + H(+) = a quinol + NAD(+). The enzyme catalyses a quinone + NADPH + H(+) = a quinol + NADP(+). In Citrobacter koseri (strain ATCC BAA-895 / CDC 4225-83 / SGSC4696), this protein is NAD(P)H dehydrogenase (quinone).